The primary structure comprises 321 residues: Transaldolase (321 aa).

The Schiff-base intermediate with substrate role is filled by Lys-132.

It belongs to the transaldolase family. Type 1 subfamily. In terms of assembly, homodimer.

It is found in the cytoplasm. The enzyme catalyses D-sedoheptulose 7-phosphate + D-glyceraldehyde 3-phosphate = D-erythrose 4-phosphate + beta-D-fructose 6-phosphate. The protein operates within carbohydrate degradation; pentose phosphate pathway; D-glyceraldehyde 3-phosphate and beta-D-fructose 6-phosphate from D-ribose 5-phosphate and D-xylulose 5-phosphate (non-oxidative stage): step 2/3. Its function is as follows. Transaldolase is important for the balance of metabolites in the pentose-phosphate pathway. The chain is Transaldolase from Rhizobium leguminosarum bv. trifolii (strain WSM2304).